Reading from the N-terminus, the 220-residue chain is Protein-L-isoaspartate O-methyltransferase (220 aa).

Ser-64 is a catalytic residue.

Belongs to the methyltransferase superfamily. L-isoaspartyl/D-aspartyl protein methyltransferase family.

The protein resides in the cytoplasm. The catalysed reaction is [protein]-L-isoaspartate + S-adenosyl-L-methionine = [protein]-L-isoaspartate alpha-methyl ester + S-adenosyl-L-homocysteine. Catalyzes the methyl esterification of L-isoaspartyl residues in peptides and proteins that result from spontaneous decomposition of normal L-aspartyl and L-asparaginyl residues. It plays a role in the repair and/or degradation of damaged proteins. The chain is Protein-L-isoaspartate O-methyltransferase from Thermococcus onnurineus (strain NA1).